A 177-amino-acid polypeptide reads, in one-letter code: Adenine phosphoribosyltransferase (177 aa).

This sequence belongs to the purine/pyrimidine phosphoribosyltransferase family. In terms of assembly, homodimer.

The protein localises to the cytoplasm. The catalysed reaction is AMP + diphosphate = 5-phospho-alpha-D-ribose 1-diphosphate + adenine. Its pathway is purine metabolism; AMP biosynthesis via salvage pathway; AMP from adenine: step 1/1. Its function is as follows. Catalyzes a salvage reaction resulting in the formation of AMP, that is energically less costly than de novo synthesis. In Leptospira borgpetersenii serovar Hardjo-bovis (strain JB197), this protein is Adenine phosphoribosyltransferase.